The sequence spans 209 residues: Ephrin-A2 (209 aa).

Positions Met1–Ala20 are cleaved as a signal peptide. The 141-residue stretch at Ala30–Asn170 folds into the Ephrin RBD domain. A glycan (N-linked (GlcNAc...) asparagine) is linked at Asn38. Cystine bridges form between Cys69–Cys110 and Cys98–Cys159. N-linked (GlcNAc...) asparagine glycosylation is found at Asn170 and Asn184. Asn184 carries GPI-anchor amidated asparagine lipidation. Residues Ser185–Ser209 constitute a propeptide, removed in mature form.

This sequence belongs to the ephrin family. As to quaternary structure, binds to the receptor tyrosine kinases EPHA3, EPHA4 and EPHA5. Interacts with EPHA8; activates EPHA8. As to expression, expressed in myogenic progenitor cells.

It localises to the cell membrane. Its function is as follows. Cell surface GPI-bound ligand for Eph receptors, a family of receptor tyrosine kinases which are crucial for migration, repulsion and adhesion during neuronal, vascular and epithelial development. Binds promiscuously Eph receptors residing on adjacent cells, leading to contact-dependent bidirectional signaling into neighboring cells. The signaling pathway downstream of the receptor is referred to as forward signaling while the signaling pathway downstream of the ephrin ligand is referred to as reverse signaling. With the EPHA2 receptor may play a role in bone remodeling through regulation of osteoclastogenesis and osteoblastogenesis. The protein is Ephrin-A2 (Efna2) of Mus musculus (Mouse).